The sequence spans 131 residues: Large ribosomal subunit protein bL12 (131 aa).

Positions 100–125 (STPKPIKEGISKEDAEAAKKQLEDAG) are enriched in basic and acidic residues. Positions 100–131 (STPKPIKEGISKEDAEAAKKQLEDAGGKVSIK) are disordered.

Belongs to the bacterial ribosomal protein bL12 family. In terms of assembly, homodimer. Part of the ribosomal stalk of the 50S ribosomal subunit. Forms a multimeric L10(L12)X complex, where L10 forms an elongated spine to which 2 to 4 L12 dimers bind in a sequential fashion. Binds GTP-bound translation factors.

In terms of biological role, forms part of the ribosomal stalk which helps the ribosome interact with GTP-bound translation factors. Is thus essential for accurate translation. The chain is Large ribosomal subunit protein bL12 from Cyanothece sp. (strain PCC 7425 / ATCC 29141).